The chain runs to 270 residues: Undecaprenyl-diphosphatase 2 (270 aa).

8 helical membrane passes run 1 to 21 (MDLIQIIVLAIVQGLTEFLPV), 39 to 59 (QGLAFDVAVHLGTLAAVVWYF), 87 to 107 (WAVILGTIPAGIAGLLFKGFI), 114 to 134 (PLVIAWATIGFGLLLWWSDVV), 147 to 167 (LSWKDILLIGCAQALALIPGT), 190 to 210 (FSFLLSIPIIVLASGLSTLDL), 221 to 241 (AMGLGVVLSAISAYLCIHFFL), and 247 to 267 (VGMLPFVIYRLILGAVLLVLF).

The protein belongs to the UppP family.

Its subcellular location is the cell inner membrane. It catalyses the reaction di-trans,octa-cis-undecaprenyl diphosphate + H2O = di-trans,octa-cis-undecaprenyl phosphate + phosphate + H(+). Catalyzes the dephosphorylation of undecaprenyl diphosphate (UPP). Confers resistance to bacitracin. The polypeptide is Undecaprenyl-diphosphatase 2 (Stutzerimonas stutzeri (strain A1501) (Pseudomonas stutzeri)).